Here is a 382-residue protein sequence, read N- to C-terminus: 3-phytase (382 aa).

Residues Met-1 to Ala-26 form the signal peptide. In terms of domain architecture, BPP spans His-27–Leu-361.

The protein localises to the secreted. It catalyses the reaction 1D-myo-inositol hexakisphosphate + H2O = 1D-myo-inositol 1,2,4,5,6-pentakisphosphate + phosphate. This is 3-phytase (phy) from Bacillus subtilis (strain 168).